Here is a 325-residue protein sequence, read N- to C-terminus: MSAKTVQGRNGKKPASPAVNLIAGGGAGMMEALVCHPLDTIKVRMQLSRRARAPGVKPRGFVATGVEIVKKETAMGLYKGLGAVLGGIIPKMAIRFTSYESYKQMLADKETGAVTSKATFLAGLAAGVTEAVAVVNPMEVVKIRLQAQHHSLADPLDTPKYRSAPHALFTVIKEEGFSTLYRGVSLTALRQGTNQAANFTAYTELKAFLQRVQPEYSNTQLPSYQTTFIGLISGAVGPFSNAPIDTIKTRLQKTRAEPGQSAVSRIMVIAKDMFKQEGARAFYKGITPRVMRVAPGQAVTFTVYEFLKGKLENSGWAFVGGNYEE.

Solcar repeat units follow at residues 15–105 (ASPA…YKQM), 117–208 (KATF…LKAF), and 221–310 (LPSY…LKGK). Transmembrane regions (helical) follow at residues 21-41 (LIAG…LDTI), 82-102 (GAVL…YESY), 121-141 (LAGL…MEVV), 187-207 (TALR…ELKA), 221-241 (LPSY…PFSN), and 282-303 (FYKG…TFTV).

The protein belongs to the mitochondrial carrier (TC 2.A.29) family.

The protein resides in the mitochondrion inner membrane. Mitochondrial transporter that does not mediate citrate export from mitochondria to cytoplasm. Its exact function has still to be determined. The sequence is that of Mitochondrial citrate transporter C from Aspergillus niger (strain ATCC 1015 / CBS 113.46 / FGSC A1144 / LSHB Ac4 / NCTC 3858a / NRRL 328 / USDA 3528.7).